The following is a 297-amino-acid chain: 4-hydroxy-tetrahydrodipicolinate synthase (297 aa).

Pyruvate is bound at residue T47. Y136 (proton donor/acceptor) is an active-site residue. K165 (schiff-base intermediate with substrate) is an active-site residue. I206 is a pyruvate binding site.

This sequence belongs to the DapA family. In terms of assembly, homotetramer; dimer of dimers.

Its subcellular location is the cytoplasm. It carries out the reaction L-aspartate 4-semialdehyde + pyruvate = (2S,4S)-4-hydroxy-2,3,4,5-tetrahydrodipicolinate + H2O + H(+). The protein operates within amino-acid biosynthesis; L-lysine biosynthesis via DAP pathway; (S)-tetrahydrodipicolinate from L-aspartate: step 3/4. Functionally, catalyzes the condensation of (S)-aspartate-beta-semialdehyde [(S)-ASA] and pyruvate to 4-hydroxy-tetrahydrodipicolinate (HTPA). The chain is 4-hydroxy-tetrahydrodipicolinate synthase from Campylobacter concisus (strain 13826).